Reading from the N-terminus, the 76-residue chain is Small ribosomal subunit protein eS17 (76 aa).

It belongs to the eukaryotic ribosomal protein eS17 family.

This Picrophilus torridus (strain ATCC 700027 / DSM 9790 / JCM 10055 / NBRC 100828 / KAW 2/3) protein is Small ribosomal subunit protein eS17.